The chain runs to 173 residues: Small ribosomal subunit protein uS7 (173 aa).

This sequence belongs to the universal ribosomal protein uS7 family. As to quaternary structure, part of the 30S ribosomal subunit. Contacts proteins S9 and S11.

One of the primary rRNA binding proteins, it binds directly to 16S rRNA where it nucleates assembly of the head domain of the 30S subunit. Is located at the subunit interface close to the decoding center, probably blocks exit of the E-site tRNA. The chain is Small ribosomal subunit protein uS7 from Orientia tsutsugamushi (strain Boryong) (Rickettsia tsutsugamushi).